Reading from the N-terminus, the 300-residue chain is Arginine/serine-rich protein 1 (300 aa).

The segment at methionine 1–tyrosine 142 is disordered. Serine 17 carries the phosphoserine modification. Residues serine 23–serine 36 show a composition bias toward low complexity. Residues serine 37–arginine 104 show a composition bias toward basic residues. The span at tyrosine 105–arginine 115 shows a compositional bias: basic and acidic residues. The segment covering arginine 116–arginine 125 has biased composition (low complexity). Serine 120 and serine 122 each carry phosphoserine. Basic residues predominate over residues serine 126–serine 141. At arginine 147 the chain carries Omega-N-methylarginine. The interval glutamine 222–valine 300 is disordered. Residues proline 268–valine 277 are compositionally biased toward basic and acidic residues. The residue at position 284 (serine 284) is a Phosphoserine.

This sequence belongs to the RSRP family. Phosphorylated. Phosphorylation at Ser-120 and Ser-122 mediates the interaction with spliceosome proteins.

It localises to the nucleus. In terms of biological role, probably acts as a spliceosomal factor that contributes to spliceosome assembly and regulates the isoform switching of proteins such as PARP6. The polypeptide is Arginine/serine-rich protein 1 (Rsrp1) (Rattus norvegicus (Rat)).